The primary structure comprises 431 residues: Tol-Pal system protein TolB (431 aa).

A signal peptide spans 1-26; that stretch reads MSLMTKLGFRALVASCLITAGSAANA. Residues 406–431 form a disordered region; the sequence is DGSAPPQILSVQGGSVREPSWGPFMQ.

This sequence belongs to the TolB family. The Tol-Pal system is composed of five core proteins: the inner membrane proteins TolA, TolQ and TolR, the periplasmic protein TolB and the outer membrane protein Pal. They form a network linking the inner and outer membranes and the peptidoglycan layer.

It is found in the periplasm. Functionally, part of the Tol-Pal system, which plays a role in outer membrane invagination during cell division and is important for maintaining outer membrane integrity. The polypeptide is Tol-Pal system protein TolB (Burkholderia orbicola (strain MC0-3)).